Consider the following 264-residue polypeptide: Transmembrane protein 270 (264 aa).

The next 3 helical transmembrane spans lie at 31–51 (HLYRFLLLKMAIFQHWVLGLA), 74–94 (LSLALRAGLTLLWVPMWLLLW), and 133–153 (LFLSCLHSLMLVALLLLLLTW). Positions 227–236 (AQEVKSQETS) are enriched in polar residues. A disordered region spans residues 227–264 (AQEVKSQETSGPPPQFLIPESSTTESGPLPPQPETPGE). Over residues 254 to 264 (PLPPQPETPGE) the composition is skewed to pro residues.

As to expression, testis.

The protein localises to the membrane. The polypeptide is Transmembrane protein 270 (Mus musculus (Mouse)).